Consider the following 928-residue polypeptide: Putative replication origin binding protein (928 aa).

One can recognise a Helicase ATP-binding domain in the interval 386–516; the sequence is NIVPPKGHIT…QVLRDILMTA (131 aa). 399-406 provides a ligand contact to ATP; it reads ASLGTGKT. Positions 484–487 match the DEAD box motif; the sequence is DECD.

The protein belongs to the herpesviridae oribp family.

Displays bipolar ssDNA and dsDNA unwinding activities that require the same core catalytic residues for unwinding in either direction, the 3'-5' direction being more robust. The polypeptide is Putative replication origin binding protein (Escherichia coli (Enterobacteria phage T5)).